Reading from the N-terminus, the 380-residue chain is Succinyl-diaminopimelate desuccinylase (380 aa).

His-71 serves as a coordination point for Zn(2+). Asp-73 is an active-site residue. A Zn(2+)-binding site is contributed by Asp-104. Glu-136 acts as the Proton acceptor in catalysis. Residues Glu-137, Glu-166, and His-351 each contribute to the Zn(2+) site.

This sequence belongs to the peptidase M20A family. DapE subfamily. In terms of assembly, homodimer. Zn(2+) serves as cofactor. It depends on Co(2+) as a cofactor.

The enzyme catalyses N-succinyl-(2S,6S)-2,6-diaminopimelate + H2O = (2S,6S)-2,6-diaminopimelate + succinate. The protein operates within amino-acid biosynthesis; L-lysine biosynthesis via DAP pathway; LL-2,6-diaminopimelate from (S)-tetrahydrodipicolinate (succinylase route): step 3/3. Catalyzes the hydrolysis of N-succinyl-L,L-diaminopimelic acid (SDAP), forming succinate and LL-2,6-diaminopimelate (DAP), an intermediate involved in the bacterial biosynthesis of lysine and meso-diaminopimelic acid, an essential component of bacterial cell walls. This chain is Succinyl-diaminopimelate desuccinylase, found in Ehrlichia canis (strain Jake).